We begin with the raw amino-acid sequence, 298 residues long: Acetylglutamate kinase (298 aa).

Substrate is bound by residues 69–70, arginine 91, and asparagine 196; that span reads GG.

The protein belongs to the acetylglutamate kinase family. ArgB subfamily.

The protein localises to the cytoplasm. It catalyses the reaction N-acetyl-L-glutamate + ATP = N-acetyl-L-glutamyl 5-phosphate + ADP. It participates in amino-acid biosynthesis; L-arginine biosynthesis; N(2)-acetyl-L-ornithine from L-glutamate: step 2/4. In terms of biological role, catalyzes the ATP-dependent phosphorylation of N-acetyl-L-glutamate. This chain is Acetylglutamate kinase, found in Bradyrhizobium sp. (strain ORS 278).